The following is a 319-amino-acid chain: Transcription elongation factor A protein 1 (319 aa).

One can recognise a TFIIS N-terminal domain in the interval 1–78 (MQEIIKCREQ…DKWKQDIEGT (78 aa)). Positions 78–106 (TSATTTSSSSSSSSSTTSTTTTKTASPSE) are enriched in low complexity. Residues 78–146 (TSATTTSSSS…TTPKTSSPPI (69 aa)) are disordered. A compositionally biased stretch (basic and acidic residues) spans 107 to 122 (SLKRKSISEDTSDRPT). Positions 133-146 (ISPPTTPKTSSPPI) are enriched in low complexity. Residues 160 to 272 (LRNKTIQLFV…ASMLGQNNEA (113 aa)) form the TFIIS central domain. The TFIIS-type zinc finger occupies 275–317 (DQFQCGKCKQRKCTYTQLQTRSADEPPTTFVKCCVKGCGNRWR). Residues cysteine 279, cysteine 282, cysteine 307, and cysteine 312 each coordinate Zn(2+).

This sequence belongs to the TFS-II family.

Its subcellular location is the nucleus. Functionally, necessary for efficient RNA polymerase II transcription elongation past template-encoded arresting sites. The arresting sites in DNA have the property of trapping a certain fraction of elongating RNA polymerases that pass through, resulting in locked ternary complexes. Cleavage of the nascent transcript by S-II allows the resumption of elongation from the new 3'-terminus. This Dictyostelium discoideum (Social amoeba) protein is Transcription elongation factor A protein 1 (tcea1).